Here is a 145-residue protein sequence, read N- to C-terminus: Cell wall teichoic acid glycosylation protein GtcA (145 aa).

4 helical membrane passes run I21 to L41, I52 to N69, F96 to N116, and K121 to F141.

Belongs to the GtrA family.

Its subcellular location is the cell membrane. Its function is as follows. Involved in the decoration of cell wall teichoic acid with galactose and glucose. This is Cell wall teichoic acid glycosylation protein GtcA (gtcA) from Listeria monocytogenes serovar 1/2a (strain ATCC BAA-679 / EGD-e).